The following is a 144-amino-acid chain: Putative pre-16S rRNA nuclease (144 aa).

Belongs to the YqgF nuclease family.

The protein localises to the cytoplasm. In terms of biological role, could be a nuclease involved in processing of the 5'-end of pre-16S rRNA. The protein is Putative pre-16S rRNA nuclease of Acaryochloris marina (strain MBIC 11017).